Consider the following 314-residue polypeptide: Ribonucleoside-diphosphate reductase small subunit (314 aa).

3 residues coordinate Fe cation: Asp73, Glu103, and His106. Tyr110 is an active-site residue. The helical transmembrane segment at 160 to 180 (VLMILIEGIFFSSSFAAIAYL) threads the bilayer. Fe cation-binding residues include Glu166, Glu200, and His203.

Belongs to the ribonucleoside diphosphate reductase small chain family. Heterotetramer composed of a homodimer of the large subunit (R1) and a homodimer of the small subunit (R2). Larger multisubunit protein complex are also active, composed of (R1)n(R2)n. Fe cation serves as cofactor.

Its subcellular location is the host membrane. It carries out the reaction a 2'-deoxyribonucleoside 5'-diphosphate + [thioredoxin]-disulfide + H2O = a ribonucleoside 5'-diphosphate + [thioredoxin]-dithiol. In terms of biological role, ribonucleoside-diphosphate reductase holoenzyme provides the precursors necessary for viral DNA synthesis. Allows virus growth in non-dividing cells, as well as reactivation from latency in infected hosts. Catalyzes the biosynthesis of deoxyribonucleotides from the corresponding ribonucleotides. This is Ribonucleoside-diphosphate reductase small subunit from Bovine herpesvirus 1.1 (strain Cooper) (BoHV-1).